The following is a 226-amino-acid chain: ATP synthase F(0) complex subunit a (226 aa).

The next 6 membrane-spanning stretches (helical) occupy residues 6 to 26 (FASF…IIMF), 68 to 88 (WTLM…LGLL), 97 to 117 (QLSM…ITGF), 138 to 158 (IPML…ALAV), 164 to 184 (ITAG…LMNI), and 189 to 209 (ATIT…VALI).

It belongs to the ATPase A chain family. As to quaternary structure, component of the ATP synthase complex composed at least of ATP5F1A/subunit alpha, ATP5F1B/subunit beta, ATP5MC1/subunit c (homooctomer), MT-ATP6/subunit a, MT-ATP8/subunit 8, ATP5ME/subunit e, ATP5MF/subunit f, ATP5MG/subunit g, ATP5MK/subunit k, ATP5MJ/subunit j, ATP5F1C/subunit gamma, ATP5F1D/subunit delta, ATP5F1E/subunit epsilon, ATP5PF/subunit F6, ATP5PB/subunit b, ATP5PD/subunit d, ATP5PO/subunit OSCP. ATP synthase complex consists of a soluble F(1) head domain (subunits alpha(3) and beta(3)) - the catalytic core - and a membrane F(0) domain - the membrane proton channel (subunits c, a, 8, e, f, g, k and j). These two domains are linked by a central stalk (subunits gamma, delta, and epsilon) rotating inside the F1 region and a stationary peripheral stalk (subunits F6, b, d, and OSCP). Interacts with DNAJC30; interaction is direct.

The protein resides in the mitochondrion inner membrane. The catalysed reaction is H(+)(in) = H(+)(out). Functionally, subunit a, of the mitochondrial membrane ATP synthase complex (F(1)F(0) ATP synthase or Complex V) that produces ATP from ADP in the presence of a proton gradient across the membrane which is generated by electron transport complexes of the respiratory chain. ATP synthase complex consist of a soluble F(1) head domain - the catalytic core - and a membrane F(1) domain - the membrane proton channel. These two domains are linked by a central stalk rotating inside the F(1) region and a stationary peripheral stalk. During catalysis, ATP synthesis in the catalytic domain of F(1) is coupled via a rotary mechanism of the central stalk subunits to proton translocation. With the subunit c (ATP5MC1), forms the proton-conducting channel in the F(0) domain, that contains two crucial half-channels (inlet and outlet) that facilitate proton movement from the mitochondrial intermembrane space (IMS) into the matrix. Protons are taken up via the inlet half-channel and released through the outlet half-channel, following a Grotthuss mechanism. The chain is ATP synthase F(0) complex subunit a from Mus musculus (Mouse).